A 697-amino-acid polypeptide reads, in one-letter code: Polyribonucleotide nucleotidyltransferase (697 aa).

Residues aspartate 488 and aspartate 494 each contribute to the Mg(2+) site. Residues proline 555–isoleucine 614 form the KH domain. The region spanning glycine 624–lysine 692 is the S1 motif domain.

This sequence belongs to the polyribonucleotide nucleotidyltransferase family. As to quaternary structure, component of the RNA degradosome, which is a multiprotein complex involved in RNA processing and mRNA degradation. Mg(2+) serves as cofactor.

It is found in the cytoplasm. It carries out the reaction RNA(n+1) + phosphate = RNA(n) + a ribonucleoside 5'-diphosphate. Functionally, involved in mRNA degradation. Catalyzes the phosphorolysis of single-stranded polyribonucleotides processively in the 3'- to 5'-direction. The sequence is that of Polyribonucleotide nucleotidyltransferase from Acinetobacter baylyi (strain ATCC 33305 / BD413 / ADP1).